The primary structure comprises 986 residues: Bone morphogenetic protein 1 (986 aa).

The N-terminal stretch at 1–22 (MPGVARLPLLLGLLLLPRPGRP) is a signal peptide. Positions 23 to 120 (LDLADYTYDL…RWRGRSRSRR (98 aa)) are excised as a propeptide. Residues 83-125 (SIKAAVPGNTSTPSCQSTNGQPQRGACGRWRGRSRSRRAATSR) are disordered. Residues 90 to 104 (GNTSTPSCQSTNGQP) are compositionally biased toward polar residues. Residue N91 is glycosylated (N-linked (GlcNAc...) asparagine). Residues 112–122 (WRGRSRSRRAA) are compositionally biased toward basic residues. The Peptidase M12A domain maps to 121–320 (AATSRPERVW…AQARKLYKCP (200 aa)). An N-linked (GlcNAc...) asparagine glycan is attached at N142. 4 cysteine pairs are disulfide-bonded: C163–C319, C183–C205, C185–C186, and C322–C348. Zn(2+) is bound at residue H213. The active site involves E214. Zn(2+) contacts are provided by H217 and H223. CUB domains lie at 322–434 (CGET…YEAI) and 435–546 (CGGD…NFFK). Residues N332 and N363 are each glycosylated (N-linked (GlcNAc...) asparagine). Cystine bridges form between C375-C397, C435-C461, C488-C510, C551-C563, C559-C572, C574-C587, C591-C617, C644-C666, C707-C718, C714-C727, C729-C742, C747-C773, C800-C822, C860-C890, and C917-C939. The EGF-like 1; calcium-binding domain occupies 547 to 588 (EVDECSRPNRGGCEQRCLNTLGSYKCSCDPGYELAPDKRRCE). One can recognise a CUB 3 domain in the interval 591-703 (CGGFLTKLNG…KGFKAHFFSD (113 aa)). N-linked (GlcNAc...) asparagine glycosylation occurs at N599. The EGF-like 2; calcium-binding domain maps to 704-743 (KDECSKDNGGCQQDCVNTFGSYECQCRSGFVLHDNKHDCK). CUB domains are found at residues 747-859 (CDHK…HATE) and 860-976 (CGGQ…YTST). 2 positions are modified to omega-N-methylarginine: R934 and R937.

Interacts with POSTN, the interaction promotes deposition on the extracellular matrix. Requires Zn(2+) as cofactor. Proteolytically activated in the trans-Golgi network by furin-like/paired basic proprotein convertases, cleavage is not required for secretion. Ubiquitous.

It is found in the golgi apparatus. It localises to the trans-Golgi network. The protein resides in the secreted. The protein localises to the extracellular space. Its subcellular location is the extracellular matrix. The enzyme catalyses Cleavage of the C-terminal propeptide at Ala-|-Asp in type I and II procollagens and at Arg-|-Asp in type III.. With respect to regulation, activity is increased by the procollagen C-endopeptidase enhancer protein. In terms of biological role, metalloprotease that plays key roles in regulating the formation of the extracellular matrix (ECM) via processing of various precursor proteins into mature functional enzymes or structural proteins. Thereby participates in several developmental and physiological processes such as cartilage and bone formation, muscle growth and homeostasis, wound healing and tissue repair. Roles in ECM formation include cleavage of the C-terminal propeptides from procollagens such as procollagen I, II and III or the proteolytic activation of the enzyme lysyl oxidase LOX, necessary to formation of covalent cross-links in collagen and elastic fibers. Additional substrates include matricellular thrombospondin-1/THBS1 whose cleavage leads to cell adhesion disruption and TGF-beta activation. Its function is as follows. Plays an important role in bone repair by acting as a coactivator of BMP7. The protein is Bone morphogenetic protein 1 (BMP1) of Homo sapiens (Human).